Consider the following 354-residue polypeptide: Uroporphyrinogen decarboxylase (354 aa).

Substrate-binding positions include 27–31, aspartate 77, tyrosine 154, threonine 209, and histidine 327; that span reads RQAGR.

It belongs to the uroporphyrinogen decarboxylase family. Homodimer.

It localises to the cytoplasm. It carries out the reaction uroporphyrinogen III + 4 H(+) = coproporphyrinogen III + 4 CO2. Its pathway is porphyrin-containing compound metabolism; protoporphyrin-IX biosynthesis; coproporphyrinogen-III from 5-aminolevulinate: step 4/4. Catalyzes the decarboxylation of four acetate groups of uroporphyrinogen-III to yield coproporphyrinogen-III. This chain is Uroporphyrinogen decarboxylase, found in Escherichia coli (strain UTI89 / UPEC).